The primary structure comprises 141 residues: Ribonuclease P protein component (141 aa).

Disordered regions lie at residues Arg-37–Thr-56 and Arg-114–Lys-141. Over residues Arg-114–Ser-124 the composition is skewed to basic and acidic residues.

It belongs to the RnpA family. In terms of assembly, consists of a catalytic RNA component (M1 or rnpB) and a protein subunit.

The catalysed reaction is Endonucleolytic cleavage of RNA, removing 5'-extranucleotides from tRNA precursor.. Functionally, RNaseP catalyzes the removal of the 5'-leader sequence from pre-tRNA to produce the mature 5'-terminus. It can also cleave other RNA substrates such as 4.5S RNA. The protein component plays an auxiliary but essential role in vivo by binding to the 5'-leader sequence and broadening the substrate specificity of the ribozyme. The sequence is that of Ribonuclease P protein component from Brucella melitensis biotype 1 (strain ATCC 23456 / CCUG 17765 / NCTC 10094 / 16M).